Here is a 474-residue protein sequence, read N- to C-terminus: UDP-N-acetylmuramate--L-alanine ligase (474 aa).

115–121 (GTHGKTT) is an ATP binding site.

Belongs to the MurCDEF family.

The protein localises to the cytoplasm. The catalysed reaction is UDP-N-acetyl-alpha-D-muramate + L-alanine + ATP = UDP-N-acetyl-alpha-D-muramoyl-L-alanine + ADP + phosphate + H(+). It participates in cell wall biogenesis; peptidoglycan biosynthesis. Cell wall formation. The chain is UDP-N-acetylmuramate--L-alanine ligase from Novosphingobium aromaticivorans (strain ATCC 700278 / DSM 12444 / CCUG 56034 / CIP 105152 / NBRC 16084 / F199).